We begin with the raw amino-acid sequence, 206 residues long: Probable metallo-hydrolase MJ0888 (206 aa).

Zn(2+) is bound by residues His-55, His-57, Asp-59, His-60, His-130, Asp-147, and His-190.

This sequence belongs to the metallo-beta-lactamase superfamily. Zn(2+) serves as cofactor.

This is Probable metallo-hydrolase MJ0888 from Methanocaldococcus jannaschii (strain ATCC 43067 / DSM 2661 / JAL-1 / JCM 10045 / NBRC 100440) (Methanococcus jannaschii).